Here is a 120-residue protein sequence, read N- to C-terminus: Glycine cleavage system H protein (120 aa).

In terms of domain architecture, Lipoyl-binding spans 17–99 (IATVGITSHA…QGAGWFFKLK (83 aa)). The residue at position 58 (K58) is an N6-lipoyllysine.

This sequence belongs to the GcvH family. The glycine cleavage system is composed of four proteins: P, T, L and H. (R)-lipoate serves as cofactor.

The glycine cleavage system catalyzes the degradation of glycine. The H protein shuttles the methylamine group of glycine from the P protein to the T protein. The polypeptide is Glycine cleavage system H protein (Agrobacterium fabrum (strain C58 / ATCC 33970) (Agrobacterium tumefaciens (strain C58))).